Consider the following 289-residue polypeptide: Energy-coupling factor transporter ATP-binding protein EcfA2 (289 aa).

The 243-residue stretch at 3–245 (IEFKNVDYVY…QEWVKKHYLD (243 aa)) folds into the ABC transporter domain. 40 to 47 (GHTGSGKS) lines the ATP pocket.

The protein belongs to the ABC transporter superfamily. Energy-coupling factor EcfA family. In terms of assembly, forms a stable energy-coupling factor (ECF) transporter complex composed of 2 membrane-embedded substrate-binding proteins (S component), 2 ATP-binding proteins (A component) and 2 transmembrane proteins (T component).

Its subcellular location is the cell membrane. In terms of biological role, ATP-binding (A) component of a common energy-coupling factor (ECF) ABC-transporter complex. Unlike classic ABC transporters this ECF transporter provides the energy necessary to transport a number of different substrates. This Lactobacillus johnsonii (strain CNCM I-12250 / La1 / NCC 533) protein is Energy-coupling factor transporter ATP-binding protein EcfA2.